A 545-amino-acid polypeptide reads, in one-letter code: T-complex protein 1 subunit gamma (545 aa).

Met1 is modified (N-acetylmethionine). A disordered region spans residues Met1–Ser24. The residue at position 11 (Ser11) is a Phosphoserine. Lys15 is covalently cross-linked (Glycyl lysine isopeptide (Lys-Gly) (interchain with G-Cter in SUMO2)). Positions 42, 94, 95, 96, 97, 162, and 163 each coordinate ADP. ATP-binding residues include Gly42, Gly94, Thr95, and Thr96. Ser170 bears the Phosphoserine mark. An N6-acetyllysine modification is found at Lys222. A phosphoserine mark is found at Ser243 and Ser244. Tyr247 carries the phosphotyrosine modification. Residues Lys248 and Lys249 each participate in a glycyl lysine isopeptide (Lys-Gly) (interchain with G-Cter in SUMO2) cross-link. Ser252 carries the phosphoserine modification. Cys366 and Cys372 are oxidised to a cystine. Residue Lys381 forms a Glycyl lysine isopeptide (Lys-Gly) (interchain with G-Cter in SUMO2) linkage. Residue Gly411 coordinates ADP. ATP is bound at residue Gly411. Phosphothreonine occurs at positions 430 and 459. Residues Gly482, Glu483, Glu497, and Lys502 each contribute to the ADP site. Gly482 lines the ATP pocket. Residue Glu497 coordinates ATP. Residues His526–Glu545 are disordered.

This sequence belongs to the TCP-1 chaperonin family. In terms of assembly, component of the chaperonin-containing T-complex (TRiC), a hexadecamer composed of two identical back-to-back stacked rings enclosing a protein folding chamber. Each ring is made up of eight different subunits: TCP1/CCT1, CCT2, CCT3, CCT4, CCT5, CCT6A/CCT6, CCT7, CCT8. Interacts with PACRG. Interacts with DNAAF4. Interacts with DLEC1.

It localises to the cytoplasm. The enzyme catalyses ATP + H2O = ADP + phosphate + H(+). In terms of biological role, component of the chaperonin-containing T-complex (TRiC), a molecular chaperone complex that assists the folding of actin, tubulin and other proteins upon ATP hydrolysis. The TRiC complex mediates the folding of WRAP53/TCAB1, thereby regulating telomere maintenance. As part of the TRiC complex may play a role in the assembly of BBSome, a complex involved in ciliogenesis regulating transports vesicles to the cilia. The sequence is that of T-complex protein 1 subunit gamma (CCT3) from Macaca fascicularis (Crab-eating macaque).